The chain runs to 484 residues: Secreted RxLR effector protein 104 (484 aa).

Positions 1–24 (MRSAYPVLTALLVVASSQIAAGSG) are cleaved as a signal peptide. A RxLR-dEER motif is present at residues 48–65 (RFLRGSRDVHNNVANEER). A glycan (N-linked (GlcNAc...) asparagine) is linked at Asn-175. Positions 324 to 463 (ENPKGQSPYP…SSSVLTPEDV (140 aa)) are disordered. Over residues 327–346 (KGQSPYPSTPLTAASTSKGG) the composition is skewed to polar residues. The span at 402 to 413 (SSSSGPSRAFAP) shows a compositional bias: low complexity. A compositionally biased stretch (polar residues) spans 418-428 (DQTFITENSRL).

It belongs to the RxLR effector family.

The protein resides in the secreted. The protein localises to the host nucleus. Its function is as follows. Secreted effector that completely suppresses the host cell death induced by cell death-inducing proteins. This Plasmopara viticola (Downy mildew of grapevine) protein is Secreted RxLR effector protein 104.